We begin with the raw amino-acid sequence, 426 residues long: Selenate reductase subunit C (426 aa).

Transmembrane regions (helical) follow at residues 5-25 (LYFTVLSFIAIVGVISLYIRL), 40-60 (WGLWIVFYIYFIGLSAGSFLL), 78-98 (LALFTAFFSLMAGLLFVLIDL), 119-139 (WEIQFYLIYMLLIVAEIWFLM), 187-207 (ILGIAGIPTAVGVHGGTGSLF), 223-243 (IIFLVSALVSGAALMLFLYSF), 261-281 (LLTLFIGIDLLLMIAEFLIGL), 302-322 (FIFWIGQIGMVIILPILLITI), 330-350 (MGLAGLSVVLGIVCVRWILVI), and 385-405 (VGLIGIVILLFSITVQLVPVF).

Belongs to the NrfD family. In terms of assembly, the complex is composed of three subunits: SrdA, SrdB and SrdC.

The protein resides in the cell membrane. The catalysed reaction is selenite + a quinone + H2O = selenate + a quinol. Functionally, component of the respiratory selenate reductase complex, which catalyzes the reduction of selenate to selenite. This subunit probably receives electrons directly from the membrane quinone pool and transfers the electrons to the iron-sulfur clusters of SrdB. May be the membrane anchor protein subunit of the complex. The protein is Selenate reductase subunit C of Mesobacillus selenatarsenatis (strain DSM 18680 / JCM 14380 / FERM P-15431 / SF-1).